The following is a 442-amino-acid chain: D-galactonate dehydratase family member SSLG_02014 (442 aa).

Histidine 161 provides a ligand contact to substrate. Residue tyrosine 197 is the Proton donor/acceptor of the active site. Position 246 (aspartate 246) interacts with Mg(2+). The Proton donor/acceptor role is filled by histidine 248. Mg(2+) contacts are provided by glutamate 272 and glutamate 298. Residues glutamate 298, arginine 319, histidine 348, aspartate 352, and glutamate 375 each contribute to the substrate site.

It belongs to the mandelate racemase/muconate lactonizing enzyme family. GalD subfamily. The cofactor is Mg(2+).

The catalysed reaction is D-mannonate = 2-dehydro-3-deoxy-D-gluconate + H2O. Its function is as follows. Has low D-mannonate dehydratase activity (in vitro), suggesting that this is not a physiological substrate and that it has no significant role in D-mannonate degradation in vivo. Has no detectable activity with a panel of 70 other acid sugars (in vitro). This is D-galactonate dehydratase family member SSLG_02014 from Streptomyces sp. (strain SPB78).